A 234-amino-acid chain; its full sequence is bZIP transcription factor 1 (234 aa).

Residues 67-134 (RAQSDGSNAL…DKQRNAQQQL (68 aa)) form a disordered region. Over residues 70–86 (SDGSNALLSSIGPSGTT) the composition is skewed to polar residues. Residues 88–128 (RPRDEMDCFTDTHKHKRGDGNKSRRREQCRANQARYRDKQR) are compositionally biased toward basic and acidic residues. In terms of domain architecture, bZIP spans 106-169 (DGNKSRRREQ…RTNQSPWNTV (64 aa)). The tract at residues 109 to 128 (KSRRREQCRANQARYRDKQR) is basic motif. The tract at residues 134 to 155 (LERSVEQLQSELSTLKHRNLDL) is leucine-zipper.

This sequence belongs to the bZIP family. Interacts with PKZ1.

Its subcellular location is the nucleus. In terms of biological role, required for normal zoospore movement, formation of appressoria by germinated zoospore cysts and plant infection. The polypeptide is bZIP transcription factor 1 (Phytophthora infestans (Potato late blight agent)).